We begin with the raw amino-acid sequence, 203 residues long: Recombination protein RecR (203 aa).

The C4-type zinc finger occupies 58–73 (CDYCGNLDIVSICNIC). The Toprim domain maps to 81 to 177 (STIAVVESVA…KISKLASGIP (97 aa)).

This sequence belongs to the RecR family.

Functionally, may play a role in DNA repair. It seems to be involved in an RecBC-independent recombinational process of DNA repair. It may act with RecF and RecO. The polypeptide is Recombination protein RecR (Orientia tsutsugamushi (strain Ikeda) (Rickettsia tsutsugamushi)).